The following is a 74-amino-acid chain: RNA-binding protein Hfq (74 aa).

The 61-residue stretch at 9–69 folds into the Sm domain; that stretch reads DQYLNQLRKN…ISTFSPVKNV (61 aa).

Belongs to the Hfq family. Homohexamer.

RNA chaperone that binds small regulatory RNA (sRNAs) and mRNAs to facilitate mRNA translational regulation in response to envelope stress, environmental stress and changes in metabolite concentrations. Also binds with high specificity to tRNAs. This Oceanobacillus iheyensis (strain DSM 14371 / CIP 107618 / JCM 11309 / KCTC 3954 / HTE831) protein is RNA-binding protein Hfq.